A 54-amino-acid chain; its full sequence is UPF0391 membrane protein R00741 (54 aa).

Transmembrane regions (helical) follow at residues 5-25 and 30-50; these read ALVFLIVAIIAGVLGFGGIAG and IAQVLFFLFLIFLVISLVAGL.

The protein belongs to the UPF0391 family.

It is found in the cell membrane. The polypeptide is UPF0391 membrane protein R00741 (Rhizobium meliloti (strain 1021) (Ensifer meliloti)).